The following is a 97-amino-acid chain: Small ribosomal subunit protein bS20 (97 aa).

The interval 1–22 (MANSKSALKRIRTSERNRLRNK) is disordered.

It belongs to the bacterial ribosomal protein bS20 family.

Functionally, binds directly to 16S ribosomal RNA. This chain is Small ribosomal subunit protein bS20, found in Crocosphaera subtropica (strain ATCC 51142 / BH68) (Cyanothece sp. (strain ATCC 51142)).